The sequence spans 378 residues: MDALSEANGTFALTLLKKLGEGNSKNVFISPLSISSALAMVLLGAKGNTAAQMCQTLSLNKSSGGGEDVHQGFQNLLSEVNRRDTQYLLRTANRLFGEKTYDFLSSFKDSCHKFYQAEMEELDFVSATEQSRKHINTWVAEKTEGKIRDLLPANSVNPMTRLVLVNAIYFKGNWDTQFNKEHTEERPFRVSKNVEKPVQMMFKKSTCKITYIGEISTQILVLPYVGQELNMVILLPSESTDLNTVEKALTYEKFIAWTKPDVMDEEEVEVFLPRFTLEESYDMEEFLQELGMTDAFEETRADFSGMSSGRGLHLSKVMHKSFVEVTEEGTEAAAATGAVVMMRCLMVVPRFNANHPFLFFIQHSKTGAILFCGRFCSP.

Methionine 1 carries the post-translational modification N-acetylmethionine. Lysine 196 carries the post-translational modification N6-acetyllysine.

This sequence belongs to the serpin family. Ov-serpin subfamily. In terms of assembly, forms a complex with the monomeric form of beta-tryptase. As to expression, brain.

It localises to the cytoplasm. In terms of biological role, inhibitor of cathepsin G, kallikrein-8 and thrombin. May play an important role in the inner ear in the protection against leakage of lysosomal content during stress. May be involved in the regulation of serine proteinases present in the brain or extravasated from the blood. The protein is Serpin B6 (SERPINB6) of Bos taurus (Bovine).